A 235-amino-acid polypeptide reads, in one-letter code: Coiled-coil domain-containing protein 71L (235 aa).

A compositionally biased stretch (basic residues) spans 1-13; sequence MRRSMKRRRRRRP. The disordered stretch occupies residues 1 to 30; the sequence is MRRSMKRRRRRRPVAPATAARGGDFRAEDG. Serine 52 and serine 89 each carry phosphoserine. A disordered region spans residues 109 to 167; sequence PDPPGPPTARGQARRPVPRAAARRRRRGARAAAARRRKPRPPPPPPPPPEESCPAKPVA. The segment covering 120-148 has biased composition (basic residues); it reads QARRPVPRAAARRRRRGARAAAARRRKPR. Residues 149-159 are compositionally biased toward pro residues; that stretch reads PPPPPPPPPEE. Threonine 185 is modified (phosphothreonine). Serine 198 bears the Phosphoserine mark.

This Homo sapiens (Human) protein is Coiled-coil domain-containing protein 71L (CCDC71L).